Consider the following 24-residue polypeptide: Snake venom metalloproteinase Batx-1 (24 aa).

Positions 1–24 (YIELAVVADHGIFTKYNSNLNTIR) constitute a Peptidase M12B domain. Residue Glu-3 coordinates Ca(2+).

This sequence belongs to the venom metalloproteinase (M12B) family. P-I subfamily. As to quaternary structure, monomer. It depends on Zn(2+) as a cofactor. The N-terminus is blocked. In terms of processing, contains 3 disulfide bonds. As to expression, expressed by the venom gland.

The protein resides in the secreted. Its activity is regulated as follows. Inhibited by EDTA, and o-phenanthroline, but not inhibited by PMSF, pepstatin A, and aprotinin. In terms of biological role, zinc metalloproteinase that exhits a weak hemorrhagic activity. Degrades preferentially the Aalpha- (FGA) and Bbeta-chains (FGB) of fibrinogen, and partially degrades gamma-chain (FGG) at higher concentration. Induces a mild myotoxicity, but lacks coagulant activity on human plasma or bovin fibrinogen and defibrinating activity. The sequence is that of Snake venom metalloproteinase Batx-1 from Bothrops atrox (Barba amarilla).